The chain runs to 873 residues: Sine oculis-binding protein homolog (873 aa).

Over residues 1 to 14 (MAEMEKEGRPPENK) the composition is skewed to basic and acidic residues. The segment at 1-26 (MAEMEKEGRPPENKRSRKPAHPVKRE) is disordered. FCS-type zinc fingers lie at residues 142–180 (DDVSNVQIMCAWCQKVGIKRYSLSMGSEVKSFCSEKCFA) and 216–256 (FKNN…KCLN). Disordered regions lie at residues 308–339 (RRKAPSPVATAGQSQGPGPSASTTVSPSDTAN), 413–484 (RGPP…PGAP), and 550–646 (KPPN…PGVL). Polar residues predominate over residues 318-339 (AGQSQGPGPSASTTVSPSDTAN). Low complexity predominate over residues 417–433 (HHASNPNSPLSNPMLPG). Over residues 460–484 (IHPPSTPTMPGNPPGLLPPPPPGAP) the composition is skewed to pro residues. The span at 614-625 (EHGRSEVVDLTR) shows a compositional bias: basic and acidic residues. Positions 620–624 (VVDLT) match the SUMO interaction motif 1 (SIM); mediates the binding to polysumoylated substrates motif. Serine 629 is modified (phosphoserine). An SUMO interaction motif 2 (SIM); mediates the binding to polysumoylated substrates motif is present at residues 653–657 (VIDLT). A Glycyl lysine isopeptide (Lys-Gly) (interchain with G-Cter in SUMO2) cross-link involves residue lysine 677. A Phosphoserine modification is found at serine 699. The disordered stretch occupies residues 730–771 (AAAEGAKSAEPPPEQPPPPPPPAPPKKLLSPEEPAVSELESV). Residues 739–754 (EPPPEQPPPPPPPAPP) are compositionally biased toward pro residues.

The protein belongs to the SOBP family. Interacts (via SIM domains) with SUMO1 and SUMO2.

Functionally, implicated in development of the cochlea. The sequence is that of Sine oculis-binding protein homolog from Homo sapiens (Human).